An 883-amino-acid chain; its full sequence is Valine--tRNA ligase (883 aa).

Residues 50-60 (PNVTGKLHMGH) carry the 'HIGH' region motif. Residues 527–531 (KMSKS) carry the 'KMSKS' region motif. Lys530 is an ATP binding site. Positions 811-883 (LNELIDLDEE…KQRLEQLQRA (73 aa)) form a coiled coil. The segment at 859 to 883 (QRTKRSDFEDQLTSTKQRLEQLQRA) is disordered.

Belongs to the class-I aminoacyl-tRNA synthetase family. ValS type 1 subfamily. In terms of assembly, monomer.

It localises to the cytoplasm. The catalysed reaction is tRNA(Val) + L-valine + ATP = L-valyl-tRNA(Val) + AMP + diphosphate. Catalyzes the attachment of valine to tRNA(Val). As ValRS can inadvertently accommodate and process structurally similar amino acids such as threonine, to avoid such errors, it has a 'posttransfer' editing activity that hydrolyzes mischarged Thr-tRNA(Val) in a tRNA-dependent manner. In Lacticaseibacillus casei (Lactobacillus casei), this protein is Valine--tRNA ligase.